A 29-amino-acid chain; its full sequence is Truncated non-structural protein of 4.9 kDa (29 aa).

The protein belongs to the coronaviruses ns4.9 protein family.

This is Truncated non-structural protein of 4.9 kDa from Bovine coronavirus (strain 98TXSF-110-ENT) (BCoV-ENT).